Reading from the N-terminus, the 100-residue chain is Small ribosomal subunit protein uS14c (100 aa).

This sequence belongs to the universal ribosomal protein uS14 family. Part of the 30S ribosomal subunit.

It is found in the plastid. Its subcellular location is the chloroplast. In terms of biological role, binds 16S rRNA, required for the assembly of 30S particles. The chain is Small ribosomal subunit protein uS14c from Chlamydomonas reinhardtii (Chlamydomonas smithii).